The following is a 379-amino-acid chain: UDP-4-amino-4-deoxy-L-arabinose--oxoglutarate aminotransferase (379 aa).

Lysine 182 carries the N6-(pyridoxal phosphate)lysine modification.

Belongs to the DegT/DnrJ/EryC1 family. ArnB subfamily. As to quaternary structure, homodimer. Pyridoxal 5'-phosphate is required as a cofactor.

The enzyme catalyses UDP-4-amino-4-deoxy-beta-L-arabinose + 2-oxoglutarate = UDP-beta-L-threo-pentopyranos-4-ulose + L-glutamate. Its pathway is nucleotide-sugar biosynthesis; UDP-4-deoxy-4-formamido-beta-L-arabinose biosynthesis; UDP-4-deoxy-4-formamido-beta-L-arabinose from UDP-alpha-D-glucuronate: step 2/3. It functions in the pathway bacterial outer membrane biogenesis; lipopolysaccharide biosynthesis. Its function is as follows. Catalyzes the conversion of UDP-4-keto-arabinose (UDP-Ara4O) to UDP-4-amino-4-deoxy-L-arabinose (UDP-L-Ara4N). The modified arabinose is attached to lipid A and is required for resistance to polymyxin and cationic antimicrobial peptides. In Escherichia coli O8 (strain IAI1), this protein is UDP-4-amino-4-deoxy-L-arabinose--oxoglutarate aminotransferase.